The following is a 141-amino-acid chain: D-aminoacyl-tRNA deacylase (141 aa).

The short motif at 133-134 is the Gly-cisPro motif, important for rejection of L-amino acids element; that stretch reads GP.

Belongs to the DTD family. As to quaternary structure, homodimer.

The protein resides in the cytoplasm. The catalysed reaction is glycyl-tRNA(Ala) + H2O = tRNA(Ala) + glycine + H(+). The enzyme catalyses a D-aminoacyl-tRNA + H2O = a tRNA + a D-alpha-amino acid + H(+). An aminoacyl-tRNA editing enzyme that deacylates mischarged D-aminoacyl-tRNAs. Also deacylates mischarged glycyl-tRNA(Ala), protecting cells against glycine mischarging by AlaRS. Acts via tRNA-based rather than protein-based catalysis; rejects L-amino acids rather than detecting D-amino acids in the active site. By recycling D-aminoacyl-tRNA to D-amino acids and free tRNA molecules, this enzyme counteracts the toxicity associated with the formation of D-aminoacyl-tRNA entities in vivo and helps enforce protein L-homochirality. This Nautilia profundicola (strain ATCC BAA-1463 / DSM 18972 / AmH) protein is D-aminoacyl-tRNA deacylase.